Reading from the N-terminus, the 1213-residue chain is DNA-directed RNA polymerase subunit beta' (1213 aa).

Zn(2+) is bound by residues C60, C62, C75, and C78. Mg(2+) is bound by residues D449, D451, and D453. Residues C818, C892, C899, and C902 each contribute to the Zn(2+) site.

It belongs to the RNA polymerase beta' chain family. The RNAP catalytic core consists of 2 alpha, 1 beta, 1 beta' and 1 omega subunit. When a sigma factor is associated with the core the holoenzyme is formed, which can initiate transcription. Mg(2+) serves as cofactor. Requires Zn(2+) as cofactor.

The catalysed reaction is RNA(n) + a ribonucleoside 5'-triphosphate = RNA(n+1) + diphosphate. In terms of biological role, DNA-dependent RNA polymerase catalyzes the transcription of DNA into RNA using the four ribonucleoside triphosphates as substrates. This chain is DNA-directed RNA polymerase subunit beta', found in Lactiplantibacillus plantarum (strain ATCC BAA-793 / NCIMB 8826 / WCFS1) (Lactobacillus plantarum).